The primary structure comprises 132 residues: Small ribosomal subunit protein uS8 (132 aa).

This sequence belongs to the universal ribosomal protein uS8 family. Part of the 30S ribosomal subunit. Contacts proteins S5 and S12.

One of the primary rRNA binding proteins, it binds directly to 16S rRNA central domain where it helps coordinate assembly of the platform of the 30S subunit. The chain is Small ribosomal subunit protein uS8 from Listeria innocua serovar 6a (strain ATCC BAA-680 / CLIP 11262).